Consider the following 76-residue polypeptide: Defensin-like protein 5 (76 aa).

A signal peptide spans 1–29; the sequence is MKVSPRLNSALLLLFMILATVMGLVTVEA. 4 disulfide bridges follow: cysteine 32–cysteine 76, cysteine 43–cysteine 63, cysteine 49–cysteine 70, and cysteine 53–cysteine 72.

This sequence belongs to the DEFL family.

It is found in the secreted. Its function is as follows. Confers broad-spectrum resistance to pathogens. In Arabidopsis thaliana (Mouse-ear cress), this protein is Defensin-like protein 5 (PDF2.4).